Consider the following 151-residue polypeptide: Ubiquitin-like protein 4A-B (151 aa).

The region spanning 1-76 (MILTIKPLQG…LNLVVRPAGE (76 aa)) is the Ubiquitin-like domain.

As to quaternary structure, component of the BAT3 complex.

It localises to the cytoplasm. Its subcellular location is the cytosol. In terms of biological role, component of the BAT3 complex, a multiprotein complex involved in the post-translational delivery of tail-anchored (TA) membrane proteins to the endoplasmic reticulum membrane. TA membrane proteins, also named type II transmembrane proteins, contain a single C-terminal transmembrane region. In Salmo salar (Atlantic salmon), this protein is Ubiquitin-like protein 4A-B (ubl4ab).